A 425-amino-acid polypeptide reads, in one-letter code: MNAMLETPELPAVFDGVKLAAVAAVLYVIVRCLNLKSPTAPPDLYFQDSGLSRFLLKSCPLLTKEYIPPLIWGKSGHIQTALYGKMGRVRSPHPYGHRKFITMSDGATSTFDLFEPLAEHCVGDDITMVICPGIANHSEKQYIRTFVDYAQKNGYRCAVLNHLGALPNIELTSPRMFTYGCTWEFGAMVNYIKRTYPQTQLVVVGFSLGGNIVCKYLGETQANQEKVLCCVSVCQGYSALRAQETFMQWDQCRRFYNFLMADNMKKIILSHRQALFGDHVKKPQSLEDTDLSRLYTATSLMQIDDNVMRKFHGYNSLKEYYEEESCMRYLHRIYVPLMLVNAADDPLVHESLLTIPKSLSEKRENVMFVLPLHGGHLGFFEGSVLFPEPLTWMDKLVVEYANAICQWERNKSQCSDTEQMEAELE.

At 1–9 (MNAMLETPE) the chain is on the cytoplasmic side. Residues 10–30 (LPAVFDGVKLAAVAAVLYVIV) traverse the membrane as a helical; Signal-anchor for type II membrane protein segment. At 31–425 (RCLNLKSPTA…DTEQMEAELE (395 aa)) the chain is on the extracellular side. The AB hydrolase-1 domain maps to 128-382 (MVICPGIANH…HGGHLGFFEG (255 aa)). N-linked (GlcNAc...) asparagine glycosylation is present at N136. Catalysis depends on S207, which acts as the Nucleophile. Catalysis depends on charge relay system residues D345 and H376. Residue N410 is glycosylated (N-linked (GlcNAc...) asparagine).

This sequence belongs to the AB hydrolase superfamily. AB hydrolase 4 family. Widely expressed with higher expression in testis. Expressed by vascular smooth muscle cells, non vascular smooth muscle cells and heart.

It is found in the cell membrane. It localises to the cytoplasmic vesicle. Its subcellular location is the secretory vesicle. The protein resides in the acrosome membrane. The enzyme catalyses Hydrolyzes glycerol monoesters of long-chain fatty acids.. It catalyses the reaction an acetyl ester + H2O = an aliphatic alcohol + acetate + H(+). The catalysed reaction is a triacylglycerol + H2O = a diacylglycerol + a fatty acid + H(+). It carries out the reaction 2-(5Z,8Z,11Z,14Z-eicosatetraenoyl)-glycerol + H2O = glycerol + (5Z,8Z,11Z,14Z)-eicosatetraenoate + H(+). The enzyme catalyses a butanoate ester + H2O = an aliphatic alcohol + butanoate + H(+). It catalyses the reaction hexadecanoate ester + H2O = an aliphatic alcohol + hexadecanoate + H(+). With respect to regulation, acylglycerol lipase activity is activated upon binding to progesterone. Its function is as follows. Progesterone-dependent acylglycerol lipase that catalyzes hydrolysis of endocannabinoid arachidonoylglycerol (AG) from cell membrane. Acts as a progesterone receptor: progesterone-binding activates the acylglycerol lipase activity, mediating degradation of 1-arachidonoylglycerol (1AG) and 2-arachidonoylglycerol (2AG) to glycerol and arachidonic acid (AA). Also displays an ester hydrolase activity against acetyl ester, butanoate ester and hexadecanoate ester. Plays a key role in sperm capacitation in response to progesterone by mediating degradation of 2AG, an inhibitor of the sperm calcium channel CatSper, leading to calcium influx via CatSper and sperm activation. Involved in acrosomal reaction. May also play a role in smooth muscle cells migration. In Mus musculus (Mouse), this protein is Monoacylglycerol lipase ABHD2 (Abhd2).